The chain runs to 609 residues: Granule-bound starch synthase 1, chloroplastic/amyloplastic (609 aa).

Residues 1–77 constitute a chloroplast transit peptide; it reads MSALTTSQLA…SRRFPSVVVY (77 aa). Positions 29–67 are disordered; it reads RHGFQGLKPRSPAGGDATSLSVTTSARATPKQQRSVQRG. Positions 46–66 are enriched in polar residues; the sequence is TSLSVTTSARATPKQQRSVQR. Residue K97 coordinates ADP-alpha-D-glucose. Positions 100, 408, 413, 462, and 493 each coordinate ADP. C337 and C529 are joined by a disulfide.

It belongs to the glycosyltransferase 1 family. Bacterial/plant glycogen synthase subfamily.

Its subcellular location is the plastid. It localises to the chloroplast. It is found in the amyloplast. It catalyses the reaction an NDP-alpha-D-glucose + [(1-&gt;4)-alpha-D-glucosyl](n) = [(1-&gt;4)-alpha-D-glucosyl](n+1) + a ribonucleoside 5'-diphosphate + H(+). It participates in glycan biosynthesis; starch biosynthesis. Its function is as follows. Required for the synthesis of amylose in endosperm. The chain is Granule-bound starch synthase 1, chloroplastic/amyloplastic (WAXY) from Oryza sativa subsp. indica (Rice).